Here is a 180-residue protein sequence, read N- to C-terminus: Large ribosomal subunit protein uL6 (180 aa).

The protein belongs to the universal ribosomal protein uL6 family. As to quaternary structure, part of the 50S ribosomal subunit.

This protein binds to the 23S rRNA, and is important in its secondary structure. It is located near the subunit interface in the base of the L7/L12 stalk, and near the tRNA binding site of the peptidyltransferase center. The polypeptide is Large ribosomal subunit protein uL6 (Borrelia duttonii (strain Ly)).